The chain runs to 884 residues: Exocyst complex component 2 (884 aa).

A compositionally biased stretch (basic and acidic residues) spans 1 to 11 (MEENAQARERL). The interval 1 to 27 (MEENAQARERLPPTVTGLSPTEGVPGT) is disordered. One can recognise an IPT/TIG domain in the interval 13 to 98 (PTVTGLSPTE…GSSNVKFRVF (86 aa)). Coiled coils occupy residues 178-206 (ADATIEDLRIAIKNMELSKQNEAKRSEEM) and 846-874 (NQRLQQCLKNMRTTMRMALQSLEQHAENL).

It belongs to the SEC5 family. In terms of assembly, the exocyst complex is composed of sec-3/exoc1, sec-5/exoc2, sec-6/exoc3, sec-8/exoc4, sec-10/exoc5, sec-15/exoc6, exo-70/exoc7 and exo-84/exoc8.

Its function is as follows. Component of the exocyst complex involved in the docking of exocytic vesicles with fusion sites on the plasma membrane. In Caenorhabditis elegans, this protein is Exocyst complex component 2 (sec-5).